The following is a 47-amino-acid chain: Putative protein PinH (47 aa).

The Resolvase/invertase-type recombinase catalytic domain maps to 1–47 (MWHLVVLLEELCERGINFRALAQSIFAQQWGDECCKSKTICDLKVIV).

Belongs to the site-specific recombinase resolvase family.

This Escherichia coli (strain K12) protein is Putative protein PinH (pinH).